The chain runs to 322 residues: Phosphoenolpyruvate transferase (322 aa).

D58 lines the 7,8-didemethyl-8-hydroxy-5-deazariboflavin pocket.

Belongs to the CofD family. In terms of assembly, homodimer. Mg(2+) serves as cofactor.

The catalysed reaction is enolpyruvoyl-2-diphospho-5'-guanosine + 7,8-didemethyl-8-hydroxy-5-deazariboflavin = dehydro coenzyme F420-0 + GMP + H(+). Its pathway is cofactor biosynthesis; coenzyme F420 biosynthesis. In terms of biological role, catalyzes the transfer of the phosphoenolpyruvate moiety from enoylpyruvoyl-2-diphospho-5'-guanosine (EPPG) to 7,8-didemethyl-8-hydroxy-5-deazariboflavin (FO) with the formation of dehydro coenzyme F420-0 and GMP. The protein is Phosphoenolpyruvate transferase of Thermobifida fusca (strain YX).